Reading from the N-terminus, the 154-residue chain is Methylglyoxal synthase (154 aa).

One can recognise an MGS-like domain in the interval S6 to N154. Substrate is bound by residues H19, K23, T45–T48, and S65–G66. D71 acts as the Proton donor/acceptor in catalysis. Residue H98 coordinates substrate.

It belongs to the methylglyoxal synthase family.

It catalyses the reaction dihydroxyacetone phosphate = methylglyoxal + phosphate. In terms of biological role, catalyzes the formation of methylglyoxal from dihydroxyacetone phosphate. In Cellvibrio japonicus (strain Ueda107) (Pseudomonas fluorescens subsp. cellulosa), this protein is Methylglyoxal synthase.